Consider the following 146-residue polypeptide: Hemoglobin subunit beta (146 aa).

An N-acetylvaline modification is found at V1. Positions 2–146 constitute a Globin domain; it reads HLTGEEKTAV…VANALAHKYH (145 aa). At T12 the chain carries Phosphothreonine. S44 bears the Phosphoserine mark. K59 bears the N6-acetyllysine mark. H63 contributes to the heme b binding site. K82 bears the N6-acetyllysine mark. H92 serves as a coordination point for heme b. C93 carries the S-nitrosocysteine modification. K144 carries the post-translational modification N6-acetyllysine.

Belongs to the globin family. Heterotetramer of two alpha chains and two beta chains. In terms of tissue distribution, red blood cells.

Involved in oxygen transport from the lung to the various peripheral tissues. The polypeptide is Hemoglobin subunit beta (HBB) (Nasua nasua (Ring-tailed coati)).